Here is a 370-residue protein sequence, read N- to C-terminus: Cytochrome b (370 aa).

The next 4 membrane-spanning stretches (helical) occupy residues 25-45, 69-90, 105-125, and 170-190; these read FGSM…FLAV, WMMQ…YIHI, WLSG…GYVL, and FFAL…LHIL. 2 residues coordinate heme b: His75 and His89. Residues His174 and His188 each coordinate heme b. His193 contributes to the a ubiquinone binding site. 4 helical membrane passes run 218 to 238, 280 to 300, 312 to 332, and 339 to 358; these read YKDM…VSFF, LGGA…PFTH, LMQL…WTAT, and FTTI…ISNP.

This sequence belongs to the cytochrome b family. As to quaternary structure, the cytochrome bc1 complex contains 3 respiratory subunits (MT-CYB, CYC1 and UQCRFS1), 2 core proteins (UQCRC1 and UQCRC2) and probably 6 low-molecular weight proteins. Requires heme b as cofactor.

It localises to the mitochondrion inner membrane. Its function is as follows. Component of the ubiquinol-cytochrome c reductase complex (complex III or cytochrome b-c1 complex) that is part of the mitochondrial respiratory chain. The b-c1 complex mediates electron transfer from ubiquinol to cytochrome c. Contributes to the generation of a proton gradient across the mitochondrial membrane that is then used for ATP synthesis. The protein is Cytochrome b (MT-CYB) of Chilabothrus striatus (Haitian boa constrictor).